Reading from the N-terminus, the 262-residue chain is Acyl-coenzyme A diphosphatase FITM2 (262 aa).

The Cytoplasmic portion of the chain corresponds to 1 to 23; sequence MEHLERCEWLLRGTLVRAAVRRY. Residues 24–44 traverse the membrane as a helical segment; it reads LPWALVASMLAGSLLKELSPL. Residues 45–57 are Lumenal-facing; sequence PESYLSNKRNVLN. Residues 58-78 form a helical membrane-spanning segment; that stretch reads VYFVKVAWAWTFCLLLPFIAL. The Cytoplasmic portion of the chain corresponds to 79-93; sequence TNYHLTGKAGLVLRR. A helical membrane pass occupies residues 94 to 114; sequence LSTLLVGTAIWYICTSIFSNI. At 115–145 the chain is on the lumenal side; sequence EHYTGSCYQSPALEGVRKEHQSKQQCHQEGG. A helical membrane pass occupies residues 146 to 166; that stretch reads FWHGFDISGHSFLLTFCALMI. His-155 is a catalytic residue. Over 167–190 the chain is Cytoplasmic; sequence VEEMSVLHEVKTDRSHCLHTAITT. The helical transmembrane segment at 191–211 threads the bilayer; it reads LVVALGILTFIWVLMFLCTAV. Residues 212-218 are Lumenal-facing; the sequence is YFHNLSQ. His-214 is an active-site residue. The chain crosses the membrane as a helical span at residues 219–239; sequence KVFGTLFGLLSWYGTYGFWYP. At 240–262 the chain is on the cytoplasmic side; it reads KAFSPGLPPQSCSLNLKQDSYKK.

It belongs to the FIT family. FIT2 subfamily. In terms of tissue distribution, widely expressed.

It localises to the endoplasmic reticulum membrane. The enzyme catalyses an acyl-CoA + H2O = an acyl-4'-phosphopantetheine + adenosine 3',5'-bisphosphate + 2 H(+). It carries out the reaction (9Z)-octadecenoyl-CoA + H2O = S-(9Z-octadecenoyl)-4'-phosphopantetheine + adenosine 3',5'-bisphosphate + 2 H(+). The catalysed reaction is (5Z,8Z,11Z,14Z)-eicosatetraenoyl-CoA + H2O = S-(5Z,8Z,11Z,14Z-eicosatetraenoyl)-4'-phosphopantetheine + adenosine 3',5'-bisphosphate + 2 H(+). It catalyses the reaction hexadecanoyl-CoA + H2O = S-hexadecanoyl-4'-phosphopantetheine + adenosine 3',5'-bisphosphate + 2 H(+). Functionally, fatty acyl-coenzyme A (CoA) diphosphatase that hydrolyzes fatty acyl-CoA to yield acyl-4'-phosphopantetheine and adenosine 3',5'-bisphosphate. Preferentially hydrolyzes unsaturated long-chain acyl-CoA substrates such as oleoyl-CoA/(9Z)-octadecenoyl-CoA and arachidonoyl-CoA/(5Z,8Z,11Z,14Z)-eicosatetraenoyl-CoA in the endoplasmic reticulum (ER) lumen. This catalytic activity is required for maintaining ER structure and for lipid droplets (LDs) biogenesis, which are lipid storage organelles involved in maintaining lipid and energy homeostasis. Directly binds to diacylglycerol (DAGs) and triacylglycerol, which is also important for LD biogenesis. May support directional budding of nacent LDs from the ER into the cytosol by reducing DAG levels at sites of LD formation. Plays a role in the regulation of cell morphology and cytoskeletal organization. In Homo sapiens (Human), this protein is Acyl-coenzyme A diphosphatase FITM2.